The following is a 256-amino-acid chain: Large ribosomal subunit protein eL8B (256 aa).

The tract at residues 1–37 (MAPGKKVAPAPFGAKSTKSNKAKNPLTHSTPKNFGIG) is disordered.

It belongs to the eukaryotic ribosomal protein eL8 family. In terms of assembly, component of the large ribosomal subunit (LSU). Mature yeast ribosomes consist of a small (40S) and a large (60S) subunit. The 40S small subunit contains 1 molecule of ribosomal RNA (18S rRNA) and 33 different proteins (encoded by 57 genes). The large 60S subunit contains 3 rRNA molecules (25S, 5.8S and 5S rRNA) and 46 different proteins (encoded by 81 genes).

The protein resides in the cytoplasm. In terms of biological role, component of the ribosome, a large ribonucleoprotein complex responsible for the synthesis of proteins in the cell. The small ribosomal subunit (SSU) binds messenger RNAs (mRNAs) and translates the encoded message by selecting cognate aminoacyl-transfer RNA (tRNA) molecules. The large subunit (LSU) contains the ribosomal catalytic site termed the peptidyl transferase center (PTC), which catalyzes the formation of peptide bonds, thereby polymerizing the amino acids delivered by tRNAs into a polypeptide chain. The nascent polypeptides leave the ribosome through a tunnel in the LSU and interact with protein factors that function in enzymatic processing, targeting, and the membrane insertion of nascent chains at the exit of the ribosomal tunnel. This Saccharomyces cerevisiae (strain ATCC 204508 / S288c) (Baker's yeast) protein is Large ribosomal subunit protein eL8B.